Reading from the N-terminus, the 328-residue chain is D-cysteine desulfhydrase (328 aa).

Residue K51 is modified to N6-(pyridoxal phosphate)lysine.

This sequence belongs to the ACC deaminase/D-cysteine desulfhydrase family. Homodimer. Requires pyridoxal 5'-phosphate as cofactor.

The catalysed reaction is D-cysteine + H2O = hydrogen sulfide + pyruvate + NH4(+) + H(+). Catalyzes the alpha,beta-elimination reaction of D-cysteine and of several D-cysteine derivatives. It could be a defense mechanism against D-cysteine. The protein is D-cysteine desulfhydrase of Escherichia coli O6:H1 (strain CFT073 / ATCC 700928 / UPEC).